The following is a 259-amino-acid chain: Aspartate/glutamate leucyltransferase (259 aa).

The protein belongs to the R-transferase family. Bpt subfamily.

The protein resides in the cytoplasm. The enzyme catalyses N-terminal L-glutamyl-[protein] + L-leucyl-tRNA(Leu) = N-terminal L-leucyl-L-glutamyl-[protein] + tRNA(Leu) + H(+). It carries out the reaction N-terminal L-aspartyl-[protein] + L-leucyl-tRNA(Leu) = N-terminal L-leucyl-L-aspartyl-[protein] + tRNA(Leu) + H(+). Its function is as follows. Functions in the N-end rule pathway of protein degradation where it conjugates Leu from its aminoacyl-tRNA to the N-termini of proteins containing an N-terminal aspartate or glutamate. The sequence is that of Aspartate/glutamate leucyltransferase from Sinorhizobium medicae (strain WSM419) (Ensifer medicae).